We begin with the raw amino-acid sequence, 337 residues long: Ketol-acid reductoisomerase (NADP(+)) (337 aa).

A KARI N-terminal Rossmann domain is found at 1 to 180 (MQVYYDKDAD…GGTKGGVIET (180 aa)). Residues 24–27 (YGSQ), Arg47, and Ser51 contribute to the NADP(+) site. The active site involves His106. Position 132 (Gly132) interacts with NADP(+). The KARI C-terminal knotted domain occupies 181–326 (TFREETETDL…AQLRAMMPWI (146 aa)). Mg(2+) contacts are provided by Asp189, Glu193, Glu225, and Glu229. Position 250 (Ser250) interacts with substrate.

It belongs to the ketol-acid reductoisomerase family. Requires Mg(2+) as cofactor.

The enzyme catalyses (2R)-2,3-dihydroxy-3-methylbutanoate + NADP(+) = (2S)-2-acetolactate + NADPH + H(+). It catalyses the reaction (2R,3R)-2,3-dihydroxy-3-methylpentanoate + NADP(+) = (S)-2-ethyl-2-hydroxy-3-oxobutanoate + NADPH + H(+). It participates in amino-acid biosynthesis; L-isoleucine biosynthesis; L-isoleucine from 2-oxobutanoate: step 2/4. The protein operates within amino-acid biosynthesis; L-valine biosynthesis; L-valine from pyruvate: step 2/4. Involved in the biosynthesis of branched-chain amino acids (BCAA). Catalyzes an alkyl-migration followed by a ketol-acid reduction of (S)-2-acetolactate (S2AL) to yield (R)-2,3-dihydroxy-isovalerate. In the isomerase reaction, S2AL is rearranged via a Mg-dependent methyl migration to produce 3-hydroxy-3-methyl-2-ketobutyrate (HMKB). In the reductase reaction, this 2-ketoacid undergoes a metal-dependent reduction by NADPH to yield (R)-2,3-dihydroxy-isovalerate. In Neisseria meningitidis serogroup C (strain 053442), this protein is Ketol-acid reductoisomerase (NADP(+)).